We begin with the raw amino-acid sequence, 728 residues long: Phosphoribosylformylglycinamidine synthase subunit PurL (728 aa).

Histidine 42 is an active-site residue. ATP contacts are provided by tyrosine 45 and lysine 84. Glutamate 86 provides a ligand contact to Mg(2+). Substrate-binding positions include 87–90 (SHNH) and arginine 109. Histidine 88 functions as the Proton acceptor in the catalytic mechanism. Aspartate 110 is a Mg(2+) binding site. Residue glutamine 237 participates in substrate binding. Residue aspartate 265 coordinates Mg(2+). Substrate is bound at residue 309–311 (ESQ). 2 residues coordinate ATP: aspartate 491 and glycine 528. Asparagine 529 provides a ligand contact to Mg(2+). Substrate is bound at residue serine 531.

This sequence belongs to the FGAMS family. As to quaternary structure, monomer. Part of the FGAM synthase complex composed of 1 PurL, 1 PurQ and 2 PurS subunits.

The protein resides in the cytoplasm. It catalyses the reaction N(2)-formyl-N(1)-(5-phospho-beta-D-ribosyl)glycinamide + L-glutamine + ATP + H2O = 2-formamido-N(1)-(5-O-phospho-beta-D-ribosyl)acetamidine + L-glutamate + ADP + phosphate + H(+). It participates in purine metabolism; IMP biosynthesis via de novo pathway; 5-amino-1-(5-phospho-D-ribosyl)imidazole from N(2)-formyl-N(1)-(5-phospho-D-ribosyl)glycinamide: step 1/2. Its function is as follows. Part of the phosphoribosylformylglycinamidine synthase complex involved in the purines biosynthetic pathway. Catalyzes the ATP-dependent conversion of formylglycinamide ribonucleotide (FGAR) and glutamine to yield formylglycinamidine ribonucleotide (FGAM) and glutamate. The FGAM synthase complex is composed of three subunits. PurQ produces an ammonia molecule by converting glutamine to glutamate. PurL transfers the ammonia molecule to FGAR to form FGAM in an ATP-dependent manner. PurS interacts with PurQ and PurL and is thought to assist in the transfer of the ammonia molecule from PurQ to PurL. The chain is Phosphoribosylformylglycinamidine synthase subunit PurL from Campylobacter jejuni subsp. jejuni serotype O:6 (strain 81116 / NCTC 11828).